A 336-amino-acid polypeptide reads, in one-letter code: GTP 3',8-cyclase (336 aa).

One can recognise a Radical SAM core domain in the interval 17 to 238 (GFSRRFHYLR…WTQQNRNLTD (222 aa)). Position 26 (Arg26) interacts with GTP. [4Fe-4S] cluster is bound by residues Cys33 and Cys37. Tyr39 contacts S-adenosyl-L-methionine. [4Fe-4S] cluster is bound at residue Cys40. A GTP-binding site is contributed by Arg75. Position 79 (Gly79) interacts with S-adenosyl-L-methionine. Thr106 is a binding site for GTP. Ser130 contacts S-adenosyl-L-methionine. Lys167 contacts GTP. Met201 lines the S-adenosyl-L-methionine pocket. 2 residues coordinate [4Fe-4S] cluster: Cys264 and Cys267. 269–271 (RLR) serves as a coordination point for GTP. Cys281 provides a ligand contact to [4Fe-4S] cluster.

Belongs to the radical SAM superfamily. MoaA family. In terms of assembly, monomer and homodimer. [4Fe-4S] cluster is required as a cofactor.

The catalysed reaction is GTP + AH2 + S-adenosyl-L-methionine = (8S)-3',8-cyclo-7,8-dihydroguanosine 5'-triphosphate + 5'-deoxyadenosine + L-methionine + A + H(+). Its pathway is cofactor biosynthesis; molybdopterin biosynthesis. Catalyzes the cyclization of GTP to (8S)-3',8-cyclo-7,8-dihydroguanosine 5'-triphosphate. This Tolumonas auensis (strain DSM 9187 / NBRC 110442 / TA 4) protein is GTP 3',8-cyclase.